A 176-amino-acid polypeptide reads, in one-letter code: Large ribosomal subunit protein uL6 (176 aa).

This sequence belongs to the universal ribosomal protein uL6 family. In terms of assembly, part of the 50S ribosomal subunit.

Functionally, this protein binds to the 23S rRNA, and is important in its secondary structure. It is located near the subunit interface in the base of the L7/L12 stalk, and near the tRNA binding site of the peptidyltransferase center. The protein is Large ribosomal subunit protein uL6 of Paraburkholderia phytofirmans (strain DSM 17436 / LMG 22146 / PsJN) (Burkholderia phytofirmans).